The sequence spans 206 residues: Guanylate kinase (206 aa).

Positions Gly-5–His-183 constitute a Guanylate kinase-like domain. Position 12–19 (Ala-12–Ser-19) interacts with ATP.

Belongs to the guanylate kinase family.

Its subcellular location is the cytoplasm. The catalysed reaction is GMP + ATP = GDP + ADP. In terms of biological role, essential for recycling GMP and indirectly, cGMP. This is Guanylate kinase from Polaromonas sp. (strain JS666 / ATCC BAA-500).